Consider the following 358-residue polypeptide: DNA polymerase IV (358 aa).

The region spanning 4-185 is the UmuC domain; that stretch reads IIHIDMDCYF…LSLRKIPGVG (182 aa). Mg(2+) is bound by residues D8 and D103. E104 is an active-site residue.

Belongs to the DNA polymerase type-Y family. As to quaternary structure, monomer. Mg(2+) is required as a cofactor.

It is found in the cytoplasm. It catalyses the reaction DNA(n) + a 2'-deoxyribonucleoside 5'-triphosphate = DNA(n+1) + diphosphate. Its function is as follows. Poorly processive, error-prone DNA polymerase involved in untargeted mutagenesis. Copies undamaged DNA at stalled replication forks, which arise in vivo from mismatched or misaligned primer ends. These misaligned primers can be extended by PolIV. Exhibits no 3'-5' exonuclease (proofreading) activity. May be involved in translesional synthesis, in conjunction with the beta clamp from PolIII. The protein is DNA polymerase IV of Shewanella sp. (strain W3-18-1).